The chain runs to 158 residues: Kalata-B3/B6 (158 aa).

The signal sequence occupies residues 1–22 (MAKFTKSLVLCLLLAAFVGAFG). Positions 23 to 66 (AELSEADKANVVNEIAANIQREILKGVKSSETTLTMFLKEMQLK) are excised as a propeptide. The segment at residues 67 to 96 (GLPTCGETCFGGTCNTPGCSCSSWPICTRN) is a cross-link (cyclopeptide (Gly-Asn)). 3 cysteine pairs are disulfide-bonded: C71-C85, C75-C87, and C80-C93. A propeptide spanning residues 97 to 121 (GLPKRAGVKSSETTLTMFLKEMQLK) is cleaved from the precursor. Positions 122–151 (GLPTCGETCFGGTCNTPGCTCDPWPICTRD) form a cross-link, cyclopeptide (Gly-Asp). Cystine bridges form between C126-C140, C130-C142, and C135-C148. Positions 152 to 158 (GLPSAAA) are excised as a propeptide.

This sequence belongs to the cyclotide family. Moebius subfamily. Post-translationally, kalata-B3 and kalata-B6 are cyclic peptides.

Probably participates in a plant defense mechanism. Has hemolytic activity. The polypeptide is Kalata-B3/B6 (OAK2) (Oldenlandia affinis).